The sequence spans 284 residues: Bifunctional protein FolD (284 aa).

Residues 166-168 (GAS) and Ile232 contribute to the NADP(+) site.

This sequence belongs to the tetrahydrofolate dehydrogenase/cyclohydrolase family. As to quaternary structure, homodimer.

It carries out the reaction (6R)-5,10-methylene-5,6,7,8-tetrahydrofolate + NADP(+) = (6R)-5,10-methenyltetrahydrofolate + NADPH. The enzyme catalyses (6R)-5,10-methenyltetrahydrofolate + H2O = (6R)-10-formyltetrahydrofolate + H(+). It functions in the pathway one-carbon metabolism; tetrahydrofolate interconversion. Its function is as follows. Catalyzes the oxidation of 5,10-methylenetetrahydrofolate to 5,10-methenyltetrahydrofolate and then the hydrolysis of 5,10-methenyltetrahydrofolate to 10-formyltetrahydrofolate. This chain is Bifunctional protein FolD, found in Shewanella amazonensis (strain ATCC BAA-1098 / SB2B).